The following is a 149-amino-acid chain: MADQLTEEQIAEFKEAFSLFDKDGDGTITTKELGTVMRSLGQNPTEAELLVMINEVDADGNGTIDFPEFLTMMARKMKDSDSEEEIKEAFKVFDKDGNGYISAAELRHVMTNLGEKLSEDEVEEMIREADVDGDGQINYEEFVKMMMSK.

Ala-2 is modified (N-acetylalanine). EF-hand domains are found at residues 8–43, 44–79, 81–116, and 117–149; these read EQIA…LGQN, PTEA…KMKD, DSEE…LGEK, and LSED…MMSK. The Ca(2+) site is built by Asp-21, Asp-23, Asp-25, Thr-27, Glu-32, Asp-57, Asp-59, Asn-61, Thr-63, Glu-68, Asp-94, Asp-96, Asn-98, Tyr-100, Glu-105, Asp-130, Asp-132, Asp-134, Gln-136, and Glu-141.

Belongs to the calmodulin family.

Calmodulin mediates the control of a large number of enzymes, ion channels and other proteins by Ca(2+). Among the enzymes to be stimulated by the calmodulin-Ca(2+) complex are a number of protein kinases and phosphatases. This Blastocladiella emersonii (Aquatic fungus) protein is Calmodulin (CMD1).